A 757-amino-acid chain; its full sequence is Endosialin (757 aa).

Residues 1 to 17 (MLLRLLLAWAAAGPTLG) form the signal peptide. Over 18 to 687 (QDPWAAEPRA…EHSQRDDRWL (670 aa)) the chain is Extracellular. Residues 30–156 (GPSSCYALFP…CTLAVDGYLC (127 aa)) form the C-type lectin domain. Residue threonine 60 is glycosylated (O-linked (GalNAc...) threonine). An intrachain disulfide couples cysteine 131 to cysteine 147. Residues 162 to 232 (GACPALQDEA…WSRAGPLCLG (71 aa)) enclose the Sushi domain. An EGF-like; calcium-binding domain is found at 312–351 (DTDECQIAGVCQQMCVNYVGGFECYCSEGHELEADGISCS). 3 disulfides stabilise this stretch: cysteine 316–cysteine 326, cysteine 322–cysteine 335, and cysteine 337–cysteine 350. Residues threonine 401, threonine 428, threonine 448, threonine 456, threonine 459, threonine 472, threonine 519, threonine 541, threonine 543, threonine 544, threonine 545, threonine 587, threonine 593, threonine 594, and threonine 595 are each glycosylated (O-linked (GalNAc...) threonine). O-linked (GalNAc...) serine glycans are attached at residues serine 598 and serine 601. O-linked (GalNAc...) threonine glycosylation is found at threonine 612 and threonine 619. Residues 618 to 627 (PTLLPSQSPT) are compositionally biased toward low complexity. Residues 618-662 (PTLLPSQSPTNQTSPISPTHPHSKAPQIPREDGPSPKLALWLPSP) are disordered. Serine 623 and serine 625 each carry an O-linked (GalNAc...) serine glycan. O-linked (GalNAc...) threonine glycans are attached at residues threonine 627 and threonine 630. A glycan (O-linked (GalNAc...) serine) is linked at serine 631. Threonine 636 carries O-linked (GalNAc...) threonine glycosylation. The O-linked (GalNAc...) serine glycan is linked to serine 640. A helical membrane pass occupies residues 688–708 (LVALLVPTCVFLVVLLALGIV). At 709-757 (YCTRCGPHAPNKRITDCYRWVIHAGSKSPTEPMPPRGSLTGVQTCRTSV) the chain is on the cytoplasmic side. The segment at 737-757 (PTEPMPPRGSLTGVQTCRTSV) is disordered. The residue at position 746 (serine 746) is a Phosphoserine. Positions 748-757 (TGVQTCRTSV) are enriched in polar residues.

As to quaternary structure, interacts with PDGFRA; this interaction promotes PDGF receptor signaling pathway. Interacts with integrin beta-1/ITGB1. Interacts with insulin receptor/INSR; this interaction diminishes INSR autophosphorylation. Post-translationally, O-glycosylated with sialylated oligosaccharides. In terms of processing, may be N-glycosylated. Expressed in tumor endothelial cells but absent or barely detectable in normal endothelial cells. Expressed in metastatic lesions of the liver and during angiogenesis of corpus luteum formation and wound healing. Expressed in vascular endothelial cells of malignant tumors but not in normal blood vessels. Expressed in stromal fibroblasts. Strongly expressed in pericytes. Expressed on stromal cells and cells with lymphoid morphology such a T-cells.

The protein localises to the membrane. Functionally, cell surface glycoprotein involved in various biological processes including angiogenesis, immune response modulation, and tissue remodeling and repair. Participates in pericyte proliferation through positive modulation of the PDGF receptor signaling pathway. Acts as a scaffold for factor X, triggering allosteric changes and the spatial re-alignment of factor X with the TF-factor VIIa complex, thereby enhancing coagulation activation. Modulates the insulin signaling pathway by interacting with insulin receptor/INSR and by diminishing its capacity to be autophosphorylated in response to insulin. Also regulates LPS-induced inflammatory response in macrophages by favoring the production of proinflammatory cytokines. In human, negatively regulates T-cell proliferation compared with stromal cells where it increases proliferation. The chain is Endosialin (CD248) from Homo sapiens (Human).